Consider the following 478-residue polypeptide: Glycogen synthase (478 aa).

Residue Lys15 participates in ADP-alpha-D-glucose binding.

The protein belongs to the glycosyltransferase 1 family. Bacterial/plant glycogen synthase subfamily.

It catalyses the reaction [(1-&gt;4)-alpha-D-glucosyl](n) + ADP-alpha-D-glucose = [(1-&gt;4)-alpha-D-glucosyl](n+1) + ADP + H(+). Its pathway is glycan biosynthesis; glycogen biosynthesis. Functionally, synthesizes alpha-1,4-glucan chains using ADP-glucose. The chain is Glycogen synthase from Streptococcus uberis (strain ATCC BAA-854 / 0140J).